Here is a 295-residue protein sequence, read N- to C-terminus: Urease accessory protein UreD (295 aa).

Belongs to the UreD family. As to quaternary structure, ureD, UreF and UreG form a complex that acts as a GTP-hydrolysis-dependent molecular chaperone, activating the urease apoprotein by helping to assemble the nickel containing metallocenter of UreC. The UreE protein probably delivers the nickel.

It localises to the cytoplasm. Required for maturation of urease via the functional incorporation of the urease nickel metallocenter. This chain is Urease accessory protein UreD, found in Ralstonia nicotianae (strain ATCC BAA-1114 / GMI1000) (Ralstonia solanacearum).